Consider the following 152-residue polypeptide: Ubiquitin-conjugating enzyme E2 W (152 aa).

A Peptide (Met-Gly) (interchain with G-Cter in ubiquitin) cross-link involves residue Met1. The UBC core domain maps to 4 to 152; that stretch reads AATRRLMKEL…TRWWFHDDSV (149 aa). The active-site Glycyl thioester intermediate is the Cys92.

It belongs to the ubiquitin-conjugating enzyme family.

The catalysed reaction is S-ubiquitinyl-[E1 ubiquitin-activating enzyme]-L-cysteine + [E2 ubiquitin-conjugating enzyme]-L-cysteine = [E1 ubiquitin-activating enzyme]-L-cysteine + S-ubiquitinyl-[E2 ubiquitin-conjugating enzyme]-L-cysteine.. It catalyses the reaction S-ubiquitinyl-[E1 ubiquitin-activating enzyme]-L-cysteine + [acceptor protein]-N-terminal-amino acid = [E1 ubiquitin-activating enzyme]-L-cysteine + N-terminal-ubiquitinyl-[acceptor protein].. It functions in the pathway protein modification; protein ubiquitination. Accepts ubiquitin from the E1 complex and catalyzes its covalent attachment to other proteins. Together with ubc-18, required for the ubiquitination of membranous organelles, and the removal of paternal mitochondria from early embryos. In Caenorhabditis elegans, this protein is Ubiquitin-conjugating enzyme E2 W.